Consider the following 416-residue polypeptide: Gamma-glutamyl phosphate reductase (416 aa).

It belongs to the gamma-glutamyl phosphate reductase family.

The protein localises to the cytoplasm. It carries out the reaction L-glutamate 5-semialdehyde + phosphate + NADP(+) = L-glutamyl 5-phosphate + NADPH + H(+). It functions in the pathway amino-acid biosynthesis; L-proline biosynthesis; L-glutamate 5-semialdehyde from L-glutamate: step 2/2. Its function is as follows. Catalyzes the NADPH-dependent reduction of L-glutamate 5-phosphate into L-glutamate 5-semialdehyde and phosphate. The product spontaneously undergoes cyclization to form 1-pyrroline-5-carboxylate. The chain is Gamma-glutamyl phosphate reductase from Leptospira interrogans serogroup Icterohaemorrhagiae serovar copenhageni (strain Fiocruz L1-130).